The following is a 467-amino-acid chain: Glutamate--tRNA ligase (467 aa).

The short motif at 9–19 (PSPTGYLHIGG) is the 'HIGH' region element. Positions 237-241 (KLSKR) match the 'KMSKS' region motif. An ATP-binding site is contributed by K240.

The protein belongs to the class-I aminoacyl-tRNA synthetase family. Glutamate--tRNA ligase type 1 subfamily. As to quaternary structure, monomer.

It localises to the cytoplasm. It catalyses the reaction tRNA(Glu) + L-glutamate + ATP = L-glutamyl-tRNA(Glu) + AMP + diphosphate. Its function is as follows. Catalyzes the attachment of glutamate to tRNA(Glu) in a two-step reaction: glutamate is first activated by ATP to form Glu-AMP and then transferred to the acceptor end of tRNA(Glu). This chain is Glutamate--tRNA ligase, found in Xanthomonas euvesicatoria pv. vesicatoria (strain 85-10) (Xanthomonas campestris pv. vesicatoria).